A 423-amino-acid chain; its full sequence is Histidine--tRNA ligase 2 (423 aa).

Belongs to the class-II aminoacyl-tRNA synthetase family. Homodimer.

Its subcellular location is the cytoplasm. It carries out the reaction tRNA(His) + L-histidine + ATP = L-histidyl-tRNA(His) + AMP + diphosphate + H(+). This chain is Histidine--tRNA ligase 2, found in Bacillus cereus (strain ATCC 14579 / DSM 31 / CCUG 7414 / JCM 2152 / NBRC 15305 / NCIMB 9373 / NCTC 2599 / NRRL B-3711).